Consider the following 39-residue polypeptide: uncharacterized protein (39 aa).

The chain crosses the membrane as a helical span at residues 18–38; the sequence is AIKVIALVVLITISAVVYLSV.

The protein localises to the membrane. This is an uncharacterized protein from Enterobacteriaceae (Bacteriophage Mu).